The following is an 88-amino-acid chain: Putative membrane protein insertion efficiency factor (88 aa).

This sequence belongs to the UPF0161 family.

The protein localises to the cell inner membrane. Its function is as follows. Could be involved in insertion of integral membrane proteins into the membrane. This Koribacter versatilis (strain Ellin345) protein is Putative membrane protein insertion efficiency factor.